Reading from the N-terminus, the 170-residue chain is Peptide deformylase (170 aa).

Fe cation is bound by residues Cys94 and His136. Glu137 is a catalytic residue. His140 provides a ligand contact to Fe cation.

It belongs to the polypeptide deformylase family. Fe(2+) serves as cofactor.

The enzyme catalyses N-terminal N-formyl-L-methionyl-[peptide] + H2O = N-terminal L-methionyl-[peptide] + formate. Functionally, removes the formyl group from the N-terminal Met of newly synthesized proteins. Requires at least a dipeptide for an efficient rate of reaction. N-terminal L-methionine is a prerequisite for activity but the enzyme has broad specificity at other positions. The sequence is that of Peptide deformylase from Xylella fastidiosa (strain M12).